The sequence spans 461 residues: Argininosuccinate lyase (461 aa).

The protein belongs to the lyase 1 family. Argininosuccinate lyase subfamily.

It localises to the cytoplasm. The catalysed reaction is 2-(N(omega)-L-arginino)succinate = fumarate + L-arginine. It functions in the pathway amino-acid biosynthesis; L-arginine biosynthesis; L-arginine from L-ornithine and carbamoyl phosphate: step 3/3. The protein is Argininosuccinate lyase of Bacillus subtilis (strain 168).